A 314-amino-acid chain; its full sequence is tRNA pseudouridine synthase B (314 aa).

H43 lines the substrate pocket. The Nucleophile role is filled by D48. Substrate-binding residues include Y76, Y179, and L200.

The protein belongs to the pseudouridine synthase TruB family. Type 1 subfamily.

It carries out the reaction uridine(55) in tRNA = pseudouridine(55) in tRNA. Its function is as follows. Responsible for synthesis of pseudouridine from uracil-55 in the psi GC loop of transfer RNAs. This is tRNA pseudouridine synthase B from Serratia proteamaculans (strain 568).